A 409-amino-acid chain; its full sequence is MMPQSGVAQPPMAPMSMDQHQYQQQAPPPTQQQQWMMPPQQPQQPQFQPQSQPAWAQQPSQQQYGAMATTNPNPSPTGNPNEVRSLWIGDLQYWMDENYLSTCFYHTGELVSAKVIRNKQTGQSEGYGFLEFRSHAAAETILQTYNGTLMPNVEQNFRMNWASLGAGERRDDSAEHTIFVGDLAADVTDYILQETFKSVYSSVRGAKVVTDRITGRSKGYGFVKFADESEQLRAMTEMNGVLCSTRPMRIGPAANKKPVGTPQKATYQNPQATQGESDPNNTTIFVGGLDPTVAEEHLRQVFSPYGELVHVKIVAGKRCGFVQFGTRASAEQALSSLNGTQLGGQSIRLSWGRSPSSKQTDQTQWGGSGGAYYGYGQGYEAYGYAPPAQDPNMYYGNYPGYANYQQPQQ.

Positions 1 to 83 (MMPQSGVAQP…PSPTGNPNEV (83 aa)) are disordered. Low complexity predominate over residues 19–81 (QHQYQQQAPP…PNPSPTGNPN (63 aa)). 2 consecutive RRM domains span residues 84-164 (RSLW…WASL) and 176-255 (HTIF…PAAN). The tract at residues 251 to 280 (GPAANKKPVGTPQKATYQNPQATQGESDPN) is disordered. Residues 263–280 (QKATYQNPQATQGESDPN) are compositionally biased toward polar residues. An RRM 3 domain is found at 282–354 (TTIFVGGLDP…QSIRLSWGRS (73 aa)).

The protein belongs to the polyadenylate-binding RBP45 family. As to quaternary structure, interacts with the poly(A) tail of mRNA in nucleus. As to expression, constitutively expressed in leaves, roots, and stems.

Its subcellular location is the nucleus. Its function is as follows. Heterogeneous nuclear ribonucleoprotein (hnRNP)-protein binding the poly(A) tail of mRNA and probably involved in some steps of pre-mRNA maturation. The chain is Polyadenylate-binding protein RBP45 (RBP45) from Nicotiana plumbaginifolia (Leadwort-leaved tobacco).